The sequence spans 122 residues: Large ribosomal subunit protein uL14 (122 aa).

It belongs to the universal ribosomal protein uL14 family. As to quaternary structure, part of the 50S ribosomal subunit. Forms a cluster with proteins L3 and L19. In the 70S ribosome, L14 and L19 interact and together make contacts with the 16S rRNA in bridges B5 and B8.

Binds to 23S rRNA. Forms part of two intersubunit bridges in the 70S ribosome. The sequence is that of Large ribosomal subunit protein uL14 from Pelobacter propionicus (strain DSM 2379 / NBRC 103807 / OttBd1).